The chain runs to 400 residues: Enoyl-[acyl-carrier-protein] reductase [NADH] 1 (400 aa).

Residues Gly48 to Tyr53, Phe74 to Glu75, Asp111 to Ala112, and Leu139 to Ala140 contribute to the NAD(+) site. Residue Tyr225 coordinates substrate. The active-site Proton donor is Tyr235. NAD(+)-binding positions include Lys244 and Val273–Thr275.

Belongs to the TER reductase family. As to quaternary structure, monomer.

It carries out the reaction a 2,3-saturated acyl-[ACP] + NAD(+) = a (2E)-enoyl-[ACP] + NADH + H(+). The protein operates within lipid metabolism; fatty acid biosynthesis. Functionally, involved in the final reduction of the elongation cycle of fatty acid synthesis (FAS II). Catalyzes the reduction of a carbon-carbon double bond in an enoyl moiety that is covalently linked to an acyl carrier protein (ACP). In Vibrio vulnificus (strain YJ016), this protein is Enoyl-[acyl-carrier-protein] reductase [NADH] 1.